Reading from the N-terminus, the 620-residue chain is 1-deoxy-D-xylulose-5-phosphate synthase (620 aa).

Thiamine diphosphate is bound by residues H80 and 121–123 (GHS). Mg(2+) is bound at residue D152. Thiamine diphosphate contacts are provided by residues 153–154 (GA), N181, Y288, and E370. Residue N181 coordinates Mg(2+).

Belongs to the transketolase family. DXPS subfamily. In terms of assembly, homodimer. Requires Mg(2+) as cofactor. Thiamine diphosphate serves as cofactor.

The enzyme catalyses D-glyceraldehyde 3-phosphate + pyruvate + H(+) = 1-deoxy-D-xylulose 5-phosphate + CO2. It participates in metabolic intermediate biosynthesis; 1-deoxy-D-xylulose 5-phosphate biosynthesis; 1-deoxy-D-xylulose 5-phosphate from D-glyceraldehyde 3-phosphate and pyruvate: step 1/1. Functionally, catalyzes the acyloin condensation reaction between C atoms 2 and 3 of pyruvate and glyceraldehyde 3-phosphate to yield 1-deoxy-D-xylulose-5-phosphate (DXP). The polypeptide is 1-deoxy-D-xylulose-5-phosphate synthase (Salmonella heidelberg (strain SL476)).